The chain runs to 325 residues: Glutarate 2-hydroxylase (325 aa).

3 residues coordinate Fe cation: His-160, Asp-162, and His-292.

The protein belongs to the glutarate hydroxylase family. Homotetramer. Fe(2+) serves as cofactor.

It carries out the reaction glutarate + 2-oxoglutarate + O2 = (S)-2-hydroxyglutarate + succinate + CO2. It participates in amino-acid degradation. Functionally, acts as an alpha-ketoglutarate-dependent dioxygenase catalyzing hydroxylation of glutarate (GA) to L-2-hydroxyglutarate (L2HG). Functions in a L-lysine degradation pathway that proceeds via cadaverine, glutarate and L-2-hydroxyglutarate. This chain is Glutarate 2-hydroxylase, found in Salmonella typhimurium (strain SL1344).